The primary structure comprises 293 residues: N-acetylneuraminate lyase (293 aa).

Residues Ser-48 and Ser-49 each coordinate aceneuramate. Catalysis depends on Tyr-137, which acts as the Proton donor. The active-site Schiff-base intermediate with substrate is the Lys-165. 5 residues coordinate aceneuramate: Thr-167, Gly-189, Asp-191, Glu-192, and Ser-208.

The protein belongs to the DapA family. NanA subfamily. As to quaternary structure, homotetramer.

The protein localises to the cytoplasm. It carries out the reaction aceneuramate = aldehydo-N-acetyl-D-mannosamine + pyruvate. It functions in the pathway amino-sugar metabolism; N-acetylneuraminate degradation; D-fructose 6-phosphate from N-acetylneuraminate: step 1/5. Catalyzes the reversible aldol cleavage of N-acetylneuraminic acid (sialic acid; Neu5Ac) to form pyruvate and N-acetylmannosamine (ManNAc) via a Schiff base intermediate. The sequence is that of N-acetylneuraminate lyase from Staphylococcus aureus (strain Mu3 / ATCC 700698).